A 113-amino-acid chain; its full sequence is Dolichyl-diphosphooligosaccharide--protein glycosyltransferase subunit DAD1 (113 aa).

N-acetylserine is present on serine 2. The Cytoplasmic portion of the chain corresponds to 2 to 30 (SASVLSVISRFLEEYLSATPQRLKLLDAY). Residues 31–51 (LLYILLTGALQFGYCLLVGTF) traverse the membrane as a helical segment. Position 52 (proline 52) is a topological domain, lumenal. The chain crosses the membrane as a helical span at residues 53–73 (FNSFLSGFISCVGSFILAVCL). The Cytoplasmic portion of the chain corresponds to 74 to 92 (RIQINPQNKADFQGISPER). The chain crosses the membrane as a helical span at residues 93 to 113 (AFADFLFASTILHLVVMNFVG).

It belongs to the DAD/OST2 family. Component of the oligosaccharyltransferase (OST) complex. OST exists in two different complex forms which contain common core subunits RPN1, RPN2, OST48, OST4, DAD1 and TMEM258, either STT3A or STT3B as catalytic subunits, and form-specific accessory subunits. STT3A complex assembly occurs through the formation of 3 subcomplexes. Subcomplex 1 contains RPN1 and TMEM258, subcomplex 2 contains the STT3A-specific subunits STT3A, DC2/OSTC, and KCP2 as well as the core subunit OST4, and subcomplex 3 contains RPN2, DAD1, and OST48. The STT3A complex can form stable complexes with the Sec61 complex or with both the Sec61 and TRAP complexes.

It localises to the endoplasmic reticulum membrane. The protein operates within protein modification; protein glycosylation. In terms of biological role, subunit of the oligosaccharyl transferase (OST) complex that catalyzes the initial transfer of a defined glycan (Glc(3)Man(9)GlcNAc(2) in eukaryotes) from the lipid carrier dolichol-pyrophosphate to an asparagine residue within an Asn-X-Ser/Thr consensus motif in nascent polypeptide chains, the first step in protein N-glycosylation. N-glycosylation occurs cotranslationally and the complex associates with the Sec61 complex at the channel-forming translocon complex that mediates protein translocation across the endoplasmic reticulum (ER). All subunits are required for a maximal enzyme activity. The chain is Dolichyl-diphosphooligosaccharide--protein glycosyltransferase subunit DAD1 from Bos taurus (Bovine).